The primary structure comprises 165 residues: Protein SprT (165 aa).

The SprT-like domain occupies 22–163 (LAQANLKLDR…RCVHCGEPLV (142 aa)). Histidine 78 lines the Zn(2+) pocket. Glutamate 79 is a catalytic residue. A Zn(2+)-binding site is contributed by histidine 82.

This sequence belongs to the SprT family. Zn(2+) serves as cofactor.

The protein resides in the cytoplasm. The chain is Protein SprT from Salmonella paratyphi C (strain RKS4594).